The primary structure comprises 280 residues: Diaminopimelate epimerase (280 aa).

Positions 11 and 64 each coordinate substrate. Cys73 (proton donor) is an active-site residue. Residues 74-75, Asn162, Asn195, and 213-214 contribute to the substrate site; these read GN and ER. Residue Cys222 is the Proton acceptor of the active site. 223–224 contributes to the substrate binding site; that stretch reads GT.

The protein belongs to the diaminopimelate epimerase family. As to quaternary structure, homodimer.

It localises to the cytoplasm. The catalysed reaction is (2S,6S)-2,6-diaminopimelate = meso-2,6-diaminopimelate. Its pathway is amino-acid biosynthesis; L-lysine biosynthesis via DAP pathway; DL-2,6-diaminopimelate from LL-2,6-diaminopimelate: step 1/1. Functionally, catalyzes the stereoinversion of LL-2,6-diaminopimelate (L,L-DAP) to meso-diaminopimelate (meso-DAP), a precursor of L-lysine and an essential component of the bacterial peptidoglycan. The protein is Diaminopimelate epimerase of Pelotomaculum thermopropionicum (strain DSM 13744 / JCM 10971 / SI).